Here is a 66-residue protein sequence, read N- to C-terminus: Large ribosomal subunit protein uL29 (66 aa).

Belongs to the universal ribosomal protein uL29 family.

This chain is Large ribosomal subunit protein uL29, found in Thermosipho melanesiensis (strain DSM 12029 / CIP 104789 / BI429).